Reading from the N-terminus, the 531-residue chain is Probable rhamnogalacturonate lyase A (531 aa).

An N-terminal signal peptide occupies residues 1–20 (MLSKALFFSSLPLWAKVASA). Disulfide bonds link C50–C93 and C184–C193. The N-linked (GlcNAc...) asparagine glycan is linked to N351.

Belongs to the polysaccharide lyase 4 family.

The protein resides in the secreted. The enzyme catalyses Endotype eliminative cleavage of L-alpha-rhamnopyranosyl-(1-&gt;4)-alpha-D-galactopyranosyluronic acid bonds of rhamnogalacturonan I domains in ramified hairy regions of pectin leaving L-rhamnopyranose at the reducing end and 4-deoxy-4,5-unsaturated D-galactopyranosyluronic acid at the non-reducing end.. Its function is as follows. Pectinolytic enzymes consist of four classes of enzymes: pectin lyase, polygalacturonase, pectin methylesterase and rhamnogalacturonase. Degrades the rhamnogalacturonan I (RG-I) backbone of pectin. In Aspergillus terreus (strain NIH 2624 / FGSC A1156), this protein is Probable rhamnogalacturonate lyase A (rglA).